A 151-amino-acid polypeptide reads, in one-letter code: UPF0208 membrane protein ECA3038 (151 aa).

The next 2 helical transmembrane spans lie at 46–66 (FGIR…IALG) and 69–89 (LGPA…GLWW).

This sequence belongs to the UPF0208 family.

It is found in the cell inner membrane. In Pectobacterium atrosepticum (strain SCRI 1043 / ATCC BAA-672) (Erwinia carotovora subsp. atroseptica), this protein is UPF0208 membrane protein ECA3038.